The sequence spans 159 residues: ATP synthase subunit b (159 aa).

Residues Asn-2–Val-22 traverse the membrane as a helical segment.

Belongs to the ATPase B chain family. F-type ATPases have 2 components, F(1) - the catalytic core - and F(0) - the membrane proton channel. F(1) has five subunits: alpha(3), beta(3), gamma(1), delta(1), epsilon(1). F(0) has three main subunits: a(1), b(2) and c(10-14). The alpha and beta chains form an alternating ring which encloses part of the gamma chain. F(1) is attached to F(0) by a central stalk formed by the gamma and epsilon chains, while a peripheral stalk is formed by the delta and b chains.

Its subcellular location is the cell membrane. In terms of biological role, f(1)F(0) ATP synthase produces ATP from ADP in the presence of a proton or sodium gradient. F-type ATPases consist of two structural domains, F(1) containing the extramembraneous catalytic core and F(0) containing the membrane proton channel, linked together by a central stalk and a peripheral stalk. During catalysis, ATP synthesis in the catalytic domain of F(1) is coupled via a rotary mechanism of the central stalk subunits to proton translocation. Component of the F(0) channel, it forms part of the peripheral stalk, linking F(1) to F(0). This chain is ATP synthase subunit b, found in Clostridium botulinum (strain ATCC 19397 / Type A).